Consider the following 321-residue polypeptide: MKKNILLVGMLVLLLMFVSACSGTASKGSSSDSASEKTEMRTYKSPKGNVNIPAHPKRIVTDFYAGELLSVGANVVGSGSWSFDNPFLKSKLKNVKDVGDPISVEKVMELQPDLIVVMNEENVDKLKKIAPTVVIPYNTAKNVEDTVSMFGDIAGAKDQAKSFMADFNKKAEAAKKKIAGVIDKDATFGIYENTDKGEFWVFNDNGGRGGQAVYNALGLKAPEKIEQDVIKKGEMKQLSQEVIPEYAADYMFITDYNPKGESKTLDKLENSSIWKNLDAVKHNRVFINDFDSFYPYDPISVSKQVDIITDMLIKRAEENKK.

The signal sequence occupies residues Met1 to Ala20. Cys21 carries N-palmitoyl cysteine lipidation. A lipid anchor (S-diacylglycerol cysteine) is attached at Cys21. The span at Thr24–Ser33 shows a compositional bias: low complexity. Residues Thr24–Gly48 form a disordered region. In terms of domain architecture, Fe/B12 periplasmic-binding spans Arg58 to Ala316.

The protein belongs to the bacterial solute-binding protein 8 family. As to quaternary structure, the complex is composed of an ATP-binding protein (FhuC), two transmembrane proteins (FhuB and FhuG) and a solute-binding protein (FhuD or YxeB).

Its subcellular location is the cell membrane. The protein resides in the membrane raft. In terms of biological role, part of the ABC transporter complex FhuCBGD involved in iron(3+)-hydroxamate import. Binds the iron(3+)-hydroxamate complex and transfers it to the membrane-bound permease. Partially required for the transport of desferrioxamine. This Bacillus subtilis (strain 168) protein is Iron(3+)-hydroxamate-binding protein YxeB (yxeB).